The following is an 81-amino-acid chain: uncharacterized protein (81 aa).

Transmembrane regions (helical) follow at residues 27–47 (ASLL…LNLT) and 54–74 (IFGA…IFIM).

It is found in the cell membrane. This is an uncharacterized protein from Bacillus subtilis (strain 168).